Consider the following 464-residue polypeptide: Glutamate--tRNA ligase (464 aa).

The 'HIGH' region motif lies at 9–19 (PSPTGYLHIGG). The 'KMSKS' region motif lies at 242-246 (KISKR). An ATP-binding site is contributed by Lys-245.

Belongs to the class-I aminoacyl-tRNA synthetase family. Glutamate--tRNA ligase type 1 subfamily. As to quaternary structure, monomer.

It localises to the cytoplasm. It carries out the reaction tRNA(Glu) + L-glutamate + ATP = L-glutamyl-tRNA(Glu) + AMP + diphosphate. Its function is as follows. Catalyzes the attachment of glutamate to tRNA(Glu) in a two-step reaction: glutamate is first activated by ATP to form Glu-AMP and then transferred to the acceptor end of tRNA(Glu). The sequence is that of Glutamate--tRNA ligase from Neisseria meningitidis serogroup C / serotype 2a (strain ATCC 700532 / DSM 15464 / FAM18).